Consider the following 192-residue polypeptide: SRP-independent targeting protein 2 homolog (192 aa).

A run of 2 helical transmembrane segments spans residues 16-36 (ILTF…ILRF) and 102-122 (WILI…YLLV). The tract at residues 149–192 (LNQPPQQQQQQQQQQHQQHATPSEPVLSKRQQKLRKKAAKYSRP) is disordered. Positions 151–167 (QPPQQQQQQQQQQHQQH) are enriched in low complexity. Over residues 178–192 (RQQKLRKKAAKYSRP) the composition is skewed to basic residues.

The protein belongs to the TMEM208 family.

It is found in the endoplasmic reticulum membrane. Functionally, may function in a SRP (signal recognition particle) and GET (guided entry of tail-anchored proteins) independent pathway for targeting a broad range of substrate proteins to the endoplasmic reticulum. Has a role in meiosis. The sequence is that of SRP-independent targeting protein 2 homolog from Schizosaccharomyces pombe (strain 972 / ATCC 24843) (Fission yeast).